The sequence spans 705 residues: Prolyl endopeptidase (705 aa).

A signal peptide spans 1-20 (MKYKKLSVAVAAFAFAAVSA). Active-site charge relay system residues include serine 556 and histidine 675.

The protein belongs to the peptidase S9A family. In terms of assembly, monomer.

Its subcellular location is the periplasm. The enzyme catalyses Hydrolysis of Pro-|-Xaa &gt;&gt; Ala-|-Xaa in oligopeptides.. Cleaves peptide bonds on the C-terminal side of prolyl residues within peptides that are up to approximately 30 amino acids long. Has an absolute requirement for an X-Pro bond in the trans configuration immediately preceding the Pro-Y scissible bond. This chain is Prolyl endopeptidase, found in Elizabethkingia miricola (Chryseobacterium miricola).